Here is a 494-residue protein sequence, read N- to C-terminus: Glycerol kinase (494 aa).

ADP is bound at residue Thr12. The ATP site is built by Thr12, Thr13, and Ser14. Thr12 serves as a coordination point for sn-glycerol 3-phosphate. Arg16 is a binding site for ADP. Residues Arg82, Glu83, Tyr135, and Asp244 each contribute to the sn-glycerol 3-phosphate site. Residues Arg82, Glu83, Tyr135, Asp244, and Gln245 each contribute to the glycerol site. ADP-binding residues include Thr266 and Gly309. ATP contacts are provided by Thr266, Gly309, Gln313, and Gly409. 2 residues coordinate ADP: Gly409 and Asn413.

The protein belongs to the FGGY kinase family.

It catalyses the reaction glycerol + ATP = sn-glycerol 3-phosphate + ADP + H(+). It participates in polyol metabolism; glycerol degradation via glycerol kinase pathway; sn-glycerol 3-phosphate from glycerol: step 1/1. With respect to regulation, inhibited by fructose 1,6-bisphosphate (FBP). Key enzyme in the regulation of glycerol uptake and metabolism. Catalyzes the phosphorylation of glycerol to yield sn-glycerol 3-phosphate. This chain is Glycerol kinase, found in Alteromonas mediterranea (strain DSM 17117 / CIP 110805 / LMG 28347 / Deep ecotype).